The following is a 260-amino-acid chain: F-actin-capping protein subunit beta (260 aa).

Belongs to the F-actin-capping protein beta subunit family. In terms of assembly, component of the F-actin capping complex, composed of a heterodimer of an alpha and a beta subunit.

Its subcellular location is the cytoplasm. The protein resides in the cytoskeleton. It localises to the actin patch. Its function is as follows. F-actin-capping proteins bind in a Ca(2+)-independent manner to the fast growing ends of actin filaments (barbed end) thereby blocking the exchange of subunits at these ends. Unlike other capping proteins (such as gelsolin and severin), these proteins do not sever actin filaments. This is F-actin-capping protein subunit beta (CAP2) from Yarrowia lipolytica (strain CLIB 122 / E 150) (Yeast).